A 719-amino-acid chain; its full sequence is DNA ligase (719 aa).

NAD(+) is bound by residues D42–D46, S92–L93, and E126. The N6-AMP-lysine intermediate role is filled by K128. NAD(+) contacts are provided by R149, E185, K301, and K325. Residues C430, C433, C448, and C454 each coordinate Zn(2+). The BRCT domain maps to A640–D719.

The protein belongs to the NAD-dependent DNA ligase family. LigA subfamily. Requires Mg(2+) as cofactor. Mn(2+) is required as a cofactor.

It carries out the reaction NAD(+) + (deoxyribonucleotide)n-3'-hydroxyl + 5'-phospho-(deoxyribonucleotide)m = (deoxyribonucleotide)n+m + AMP + beta-nicotinamide D-nucleotide.. Functionally, DNA ligase that catalyzes the formation of phosphodiester linkages between 5'-phosphoryl and 3'-hydroxyl groups in double-stranded DNA using NAD as a coenzyme and as the energy source for the reaction. It is essential for DNA replication and repair of damaged DNA. This is DNA ligase from Brucella melitensis biotype 1 (strain ATCC 23456 / CCUG 17765 / NCTC 10094 / 16M).